Here is a 507-residue protein sequence, read N- to C-terminus: ATP synthase subunit alpha, chloroplastic (507 aa).

Residue 170–177 participates in ATP binding; sequence GDRQTGKT.

This sequence belongs to the ATPase alpha/beta chains family. As to quaternary structure, F-type ATPases have 2 components, CF(1) - the catalytic core - and CF(0) - the membrane proton channel. CF(1) has five subunits: alpha(3), beta(3), gamma(1), delta(1), epsilon(1). CF(0) has four main subunits: a, b, b' and c.

It is found in the plastid. The protein resides in the chloroplast thylakoid membrane. The enzyme catalyses ATP + H2O + 4 H(+)(in) = ADP + phosphate + 5 H(+)(out). Produces ATP from ADP in the presence of a proton gradient across the membrane. The alpha chain is a regulatory subunit. The polypeptide is ATP synthase subunit alpha, chloroplastic (Ipomoea purpurea (Common morning glory)).